The primary structure comprises 466 residues: Citrate synthase, mitochondrial (466 aa).

A mitochondrion-targeting transit peptide spans 1–27 (MALLTAAARLFGAKNASCLVLAARHAS). Positions 2–21 (ALLTAAARLFGAKNASCLVL) match the SIFI-degron motif. Lys57 is subject to N6-succinyllysine. Lys76 carries the N6-acetyllysine; alternate modification. Position 76 is an N6-succinyllysine; alternate (Lys76). N6-succinyllysine is present on residues Lys103 and Lys193. The residue at position 226 (Ser226) is a Phosphoserine. The active site involves His301. N6-acetyllysine; alternate occurs at positions 321 and 327. Residues Lys321 and Lys327 each carry the N6-succinyllysine; alternate modification. His347 is an active-site residue. Position 356 (Arg356) interacts with oxaloacetate. Lys375 is subject to N6-acetyllysine; alternate. Position 375 is an N6-succinyllysine; alternate (Lys375). Position 382 is an N6-acetyllysine (Lys382). Lys393 carries the post-translational modification N6-acetyllysine; alternate. Position 393 is an N6-succinyllysine; alternate (Lys393). Position 395 is an N6,N6,N6-trimethyllysine (Lys395). The active site involves Asp402. Arg428 and Arg448 together coordinate oxaloacetate. Lys450 is subject to N6-succinyllysine. N6-acetyllysine; alternate is present on Lys459. Position 459 is an N6-succinyllysine; alternate (Lys459).

The protein belongs to the citrate synthase family. As to quaternary structure, homodimer. In terms of processing, methylated. Trimethylation at Lys-395 by CSKMT decreases citrate synthase activity. Post-translationally, in response to mitochondrial stress, the precursor protein is ubiquitinated by the SIFI complex in the cytoplasm before mitochondrial import, leading to its degradation. Within the SIFI complex, UBR4 initiates ubiquitin chain that are further elongated or branched by KCMF1.

It is found in the mitochondrion matrix. It carries out the reaction oxaloacetate + acetyl-CoA + H2O = citrate + CoA + H(+). The protein operates within carbohydrate metabolism; tricarboxylic acid cycle; isocitrate from oxaloacetate: step 1/2. Key enzyme of the Krebs tricarboxylic acid cycle which catalyzes the synthesis of citrate from acetyl coenzyme A and oxaloacetate. The sequence is that of Citrate synthase, mitochondrial (CS) from Bos taurus (Bovine).